Consider the following 480-residue polypeptide: Serine carboxypeptidase-like 35 (480 aa).

An N-terminal signal peptide occupies residues 1–20 (MKKNALWLLCILVLPAIACG). 2 N-linked (GlcNAc...) asparagine glycosylation sites follow: N79 and N146. Cystine bridges form between C95-C363, C257-C270, and C294-C331. S188 is a catalytic residue. N265 carries N-linked (GlcNAc...) asparagine glycosylation. Residue N352 is glycosylated (N-linked (GlcNAc...) asparagine). Active-site residues include D399 and H452.

Belongs to the peptidase S10 family. Expressed in seedlings, flowers and siliques.

The protein resides in the secreted. In terms of biological role, probable carboxypeptidase. This Arabidopsis thaliana (Mouse-ear cress) protein is Serine carboxypeptidase-like 35 (SCPL35).